Consider the following 420-residue polypeptide: UDP-N-acetylglucosamine 1-carboxyvinyltransferase (420 aa).

Residue 22–23 (KN) coordinates phosphoenolpyruvate. A UDP-N-acetyl-alpha-D-glucosamine-binding site is contributed by Arg93. Cys117 functions as the Proton donor in the catalytic mechanism. Cys117 is modified (2-(S-cysteinyl)pyruvic acid O-phosphothioketal). Positions 307 and 329 each coordinate UDP-N-acetyl-alpha-D-glucosamine.

Belongs to the EPSP synthase family. MurA subfamily.

It localises to the cytoplasm. It catalyses the reaction phosphoenolpyruvate + UDP-N-acetyl-alpha-D-glucosamine = UDP-N-acetyl-3-O-(1-carboxyvinyl)-alpha-D-glucosamine + phosphate. The protein operates within cell wall biogenesis; peptidoglycan biosynthesis. Cell wall formation. Adds enolpyruvyl to UDP-N-acetylglucosamine. This Shewanella halifaxensis (strain HAW-EB4) protein is UDP-N-acetylglucosamine 1-carboxyvinyltransferase.